The following is a 137-amino-acid chain: Large ribosomal subunit protein uL16 (137 aa).

Belongs to the universal ribosomal protein uL16 family. In terms of assembly, part of the 50S ribosomal subunit.

Its function is as follows. Binds 23S rRNA and is also seen to make contacts with the A and possibly P site tRNAs. The protein is Large ribosomal subunit protein uL16 of Pseudomonas entomophila (strain L48).